Reading from the N-terminus, the 269-residue chain is 3-methyl-2-oxobutanoate hydroxymethyltransferase (269 aa).

Positions 50 and 89 each coordinate Mg(2+). 3-methyl-2-oxobutanoate contacts are provided by residues 50–51 (DS), Asp89, and Lys119. Mg(2+) is bound at residue Glu121. Catalysis depends on Glu187, which acts as the Proton acceptor.

Belongs to the PanB family. As to quaternary structure, homodecamer; pentamer of dimers. It depends on Mg(2+) as a cofactor.

It localises to the cytoplasm. It catalyses the reaction 3-methyl-2-oxobutanoate + (6R)-5,10-methylene-5,6,7,8-tetrahydrofolate + H2O = 2-dehydropantoate + (6S)-5,6,7,8-tetrahydrofolate. It functions in the pathway cofactor biosynthesis; (R)-pantothenate biosynthesis; (R)-pantoate from 3-methyl-2-oxobutanoate: step 1/2. Its function is as follows. Catalyzes the reversible reaction in which hydroxymethyl group from 5,10-methylenetetrahydrofolate is transferred onto alpha-ketoisovalerate to form ketopantoate. The sequence is that of 3-methyl-2-oxobutanoate hydroxymethyltransferase from Corynebacterium efficiens (strain DSM 44549 / YS-314 / AJ 12310 / JCM 11189 / NBRC 100395).